Consider the following 393-residue polypeptide: Probable acetyl-CoA acyltransferase (393 aa).

Cysteine 88 functions as the Acyl-thioester intermediate in the catalytic mechanism. Residues histidine 349 and cysteine 378 each act as proton acceptor in the active site.

It belongs to the thiolase-like superfamily. Thiolase family.

It is found in the cytoplasm. It catalyses the reaction 2 acetyl-CoA = acetoacetyl-CoA + CoA. The protein is Probable acetyl-CoA acyltransferase of Staphylococcus aureus (strain Mu50 / ATCC 700699).